Here is a 352-residue protein sequence, read N- to C-terminus: Peptide chain release factor 1 (352 aa).

Gln229 is modified (N5-methylglutamine).

Belongs to the prokaryotic/mitochondrial release factor family. Post-translationally, methylated by PrmC. Methylation increases the termination efficiency of RF1.

It localises to the cytoplasm. Functionally, peptide chain release factor 1 directs the termination of translation in response to the peptide chain termination codons UAG and UAA. The polypeptide is Peptide chain release factor 1 (Gluconacetobacter diazotrophicus (strain ATCC 49037 / DSM 5601 / CCUG 37298 / CIP 103539 / LMG 7603 / PAl5)).